Consider the following 404-residue polypeptide: Cysteine desulfurase IscS (404 aa).

Pyridoxal 5'-phosphate-binding positions include Ala-73–Thr-74, Asn-153, Gln-181, and Ser-201–His-203. Lys-204 is subject to N6-(pyridoxal phosphate)lysine. A pyridoxal 5'-phosphate-binding site is contributed by Thr-241. Residue Cys-327 is the Cysteine persulfide intermediate of the active site. Cys-327 provides a ligand contact to [2Fe-2S] cluster.

This sequence belongs to the class-V pyridoxal-phosphate-dependent aminotransferase family. NifS/IscS subfamily. Homodimer. Forms a heterotetramer with IscU, interacts with other sulfur acceptors. The cofactor is pyridoxal 5'-phosphate.

Its subcellular location is the cytoplasm. The catalysed reaction is (sulfur carrier)-H + L-cysteine = (sulfur carrier)-SH + L-alanine. It participates in cofactor biosynthesis; iron-sulfur cluster biosynthesis. Master enzyme that delivers sulfur to a number of partners involved in Fe-S cluster assembly, tRNA modification or cofactor biosynthesis. Catalyzes the removal of elemental sulfur atoms from cysteine to produce alanine. Functions as a sulfur delivery protein for Fe-S cluster synthesis onto IscU, an Fe-S scaffold assembly protein, as well as other S acceptor proteins. This is Cysteine desulfurase IscS from Anaeromyxobacter sp. (strain Fw109-5).